We begin with the raw amino-acid sequence, 343 residues long: UDP-3-O-acylglucosamine N-acyltransferase 2 (343 aa).

Residue H251 is the Proton acceptor of the active site.

This sequence belongs to the transferase hexapeptide repeat family. LpxD subfamily. In terms of assembly, homotrimer.

The enzyme catalyses a UDP-3-O-[(3R)-3-hydroxyacyl]-alpha-D-glucosamine + a (3R)-hydroxyacyl-[ACP] = a UDP-2-N,3-O-bis[(3R)-3-hydroxyacyl]-alpha-D-glucosamine + holo-[ACP] + H(+). The protein operates within bacterial outer membrane biogenesis; LPS lipid A biosynthesis. Catalyzes the N-acylation of UDP-3-O-acylglucosamine using 3-hydroxyacyl-ACP as the acyl donor. Is involved in the biosynthesis of lipid A, a phosphorylated glycolipid that anchors the lipopolysaccharide to the outer membrane of the cell. This is UDP-3-O-acylglucosamine N-acyltransferase 2 from Legionella pneumophila subsp. pneumophila (strain Philadelphia 1 / ATCC 33152 / DSM 7513).